A 102-amino-acid chain; its full sequence is MNQYDLNLILNPNLSAEQLQIEKDYIETTLRNNGAEVTKLDDVGNRRMAYPIAKDREGYYLMYTIRAGGNPEKDIASTLRLRDNVRRVLVVKDRPEWKTKKA.

The protein belongs to the bacterial ribosomal protein bS6 family.

Its function is as follows. Binds together with bS18 to 16S ribosomal RNA. The polypeptide is Small ribosomal subunit protein bS6 (Deinococcus geothermalis (strain DSM 11300 / CIP 105573 / AG-3a)).